A 372-amino-acid polypeptide reads, in one-letter code: Mitogen-activated protein kinase spk1 (372 aa).

Positions Met1–Ser25 are enriched in polar residues. The interval Met1 to His29 is disordered. Positions Tyr39–Val327 constitute a Protein kinase domain. Residues Ile45–Val53 and Lys68 contribute to the ATP site. Residue Asp163 is the Proton acceptor of the active site. A Phosphothreonine modification is found at Thr199. A TXY motif is present at residues Thr199 to Tyr201. Phosphotyrosine is present on Tyr201.

This sequence belongs to the protein kinase superfamily. CMGC Ser/Thr protein kinase family. MAP kinase subfamily. Mg(2+) is required as a cofactor. Post-translationally, dually phosphorylated on Thr-199 and Tyr-201, which activates the enzyme.

The protein resides in the nucleus. It catalyses the reaction L-seryl-[protein] + ATP = O-phospho-L-seryl-[protein] + ADP + H(+). The enzyme catalyses L-threonyl-[protein] + ATP = O-phospho-L-threonyl-[protein] + ADP + H(+). With respect to regulation, activated by tyrosine and threonine phosphorylation. In terms of biological role, involved in mating signal transduction pathway. The polypeptide is Mitogen-activated protein kinase spk1 (spk1) (Schizosaccharomyces pombe (strain 972 / ATCC 24843) (Fission yeast)).